The primary structure comprises 91 residues: Probable Fe(2+)-trafficking protein (91 aa).

This sequence belongs to the Fe(2+)-trafficking protein family.

Its function is as follows. Could be a mediator in iron transactions between iron acquisition and iron-requiring processes, such as synthesis and/or repair of Fe-S clusters in biosynthetic enzymes. This chain is Probable Fe(2+)-trafficking protein, found in Polynucleobacter necessarius subsp. necessarius (strain STIR1).